A 339-amino-acid polypeptide reads, in one-letter code: Probable geranylgeranyl transferase type-2 subunit beta (339 aa).

PFTB repeat units follow at residues 24–65 (IDKH…YLLK), 72–113 (KNEV…IQYD), 120–161 (INSV…SLLK), 168–209 (CEKA…SILN), 216–257 (IDKL…SAID), and 264–306 (NDKL…SLMG). Residues 194 to 196 (HAG) and 236 to 248 (RPEKSSDVCYSWW) each bind geranylgeranyl diphosphate. Zn(2+) contacts are provided by D242, C244, and H294.

The protein belongs to the protein prenyltransferase subunit beta family. In terms of assembly, heterodimer of an alpha and a beta subunit. The cofactor is Zn(2+).

It carries out the reaction geranylgeranyl diphosphate + L-cysteinyl-[protein] = S-geranylgeranyl-L-cysteinyl-[protein] + diphosphate. Catalyzes the transfer of a geranyl-geranyl moiety from geranyl-geranyl pyrophosphate to both cysteines in Rab proteins with an -XXCC, -XCXC and -CCXX C-terminal. The polypeptide is Probable geranylgeranyl transferase type-2 subunit beta (rabggtb) (Dictyostelium discoideum (Social amoeba)).